Consider the following 102-residue polypeptide: Small ribosomal subunit protein uS10 (102 aa).

Belongs to the universal ribosomal protein uS10 family. As to quaternary structure, part of the 30S ribosomal subunit.

Functionally, involved in the binding of tRNA to the ribosomes. This is Small ribosomal subunit protein uS10 from Nocardioides sp. (strain ATCC BAA-499 / JS614).